Consider the following 441-residue polypeptide: Ubiquitin carboxyl-terminal hydrolase MINDY-3 (441 aa).

Cys-51 serves as the catalytic Nucleophile. His-284 functions as the Proton acceptor in the catalytic mechanism.

It belongs to the MINDY deubiquitinase family. FAM188 subfamily.

Its subcellular location is the nucleus. It catalyses the reaction Thiol-dependent hydrolysis of ester, thioester, amide, peptide and isopeptide bonds formed by the C-terminal Gly of ubiquitin (a 76-residue protein attached to proteins as an intracellular targeting signal).. In terms of biological role, hydrolase that can remove 'Lys-48'-linked conjugated ubiquitin from proteins. The polypeptide is Ubiquitin carboxyl-terminal hydrolase MINDY-3 (mindy3) (Xenopus tropicalis (Western clawed frog)).